The primary structure comprises 769 residues: 5-methyltetrahydropteroyltriglutamate--homocysteine methyltransferase (769 aa).

5-methyltetrahydropteroyltri-L-glutamate is bound by residues 18–21 (RELK) and Lys127. L-homocysteine-binding positions include 447-449 (IGS) and Glu500. Residues 447 to 449 (IGS) and Glu500 each bind L-methionine. Residues 531–532 (RC) and Trp577 each bind 5-methyltetrahydropteroyltri-L-glutamate. L-homocysteine is bound at residue Asp615. Asp615 contributes to the L-methionine binding site. Glu621 serves as a coordination point for 5-methyltetrahydropteroyltri-L-glutamate. Zn(2+) is bound by residues His657, Cys659, and Glu681. Residue His710 is the Proton donor of the active site. Cys742 contributes to the Zn(2+) binding site.

The protein belongs to the vitamin-B12 independent methionine synthase family. Requires Zn(2+) as cofactor.

The catalysed reaction is 5-methyltetrahydropteroyltri-L-glutamate + L-homocysteine = tetrahydropteroyltri-L-glutamate + L-methionine. The protein operates within amino-acid biosynthesis; L-methionine biosynthesis via de novo pathway; L-methionine from L-homocysteine (MetE route): step 1/1. In terms of biological role, catalyzes the transfer of a methyl group from 5-methyltetrahydrofolate to homocysteine resulting in methionine formation. The chain is 5-methyltetrahydropteroyltriglutamate--homocysteine methyltransferase from Chelativorans sp. (strain BNC1).